The primary structure comprises 339 residues: Protein-arginine kinase (339 aa).

A Phosphagen kinase C-terminal domain is found at 14 to 242; the sequence is IVINSNISLS…LNVISEEKKF (229 aa). ATP-binding positions include 17-21, 164-168, and 195-200; these read NSNIS, RASVN, and KGLYEE.

The protein belongs to the ATP:guanido phosphotransferase family.

The enzyme catalyses L-arginyl-[protein] + ATP = N(omega)-phospho-L-arginyl-[protein] + ADP + H(+). Functionally, catalyzes the specific phosphorylation of arginine residues in proteins. This chain is Protein-arginine kinase, found in Clostridium botulinum (strain Eklund 17B / Type B).